A 1125-amino-acid chain; its full sequence is Transient receptor potential cation channel subfamily A member 1 (1125 aa).

The Cytoplasmic segment spans residues 1 to 721 (MKRGLRRILL…KWCAYGFRAH (721 aa)). ANK repeat units follow at residues 63 to 94 (ENLCPLHHAAAEGQVELMELIINGSSCEVLNI), 98 to 127 (YGNTPLHCAAEKNQVESVKFLLSQGANPNL), 131 to 161 (NMMSPLHIAVHGMYNEVIKVLTEHKATNINL), 165 to 194 (NGNTALMSTCAKDNSEALQILLEKGAKLCK), 198 to 227 (WGDYPVHQAAFSGAKKCMELILAYGEKNGY), 239 to 268 (KKASPLHLAVQSGDLDMIKMCLDNGAHIDM), 272 to 301 (AKCMALHFAATQGATDIVKLMISSYTGSSD), 309 to 338 (NQETLLHRASLFDHHDLAEYLISVGADINS), and 342 to 371 (EGRSPLILATASASWNIVNLLLCKGAKVDI). 5 disulfide bridges follow: Cys193-Cys666, Cys463-Cys666, Cys609-Cys622, Cys622-Cys666, and Cys634-Cys859. Pro395 bears the 4-hydroxyproline; transient mark. ANK repeat units follow at residues 413 to 442 (DGCTPLHYACRQGVPVSVNNLLGFNVSIHS), 446 to 475 (DKKSPLHFAASYGRINTCQRLLQDISDTRL), 482 to 511 (HGMTPLHLAAKNGHDKVVQLLLKKGALFLS), 514 to 543 (NGWTALHHASMGGYTQTMKVILDTNLKCTD), and 548 to 577 (EGNTALHFAAREGHAKAVAMLLSYNADILL). The (E)-cinnamaldehyde site is built by Cys415 and Cys422. Residue Cys622 coordinates (E)-cinnamaldehyde. Cys634 is subject to Cysteine sulfenic acid (-SOH); transient; in hyperoxia. Residues Cys642, Cys666, and Lys712 each contribute to the (E)-cinnamaldehyde site. The chain crosses the membrane as a helical span at residues 722–742 (MMNLGSYCLGLIPMTLLVVKI). Residues 743-767 (QPGMAFNSTGIINGTSSTHEERIDT) lie on the Extracellular side of the membrane. N-linked (GlcNAc...) asparagine glycosylation is found at Asn749 and Asn755. Residues 768–788 (LNSFPIKICMILVFLSSIFGY) form a helical membrane-spanning segment. At 789-806 (CKEVIQIFQQKRNYFLDY) the chain is on the cytoplasmic side. Residues Glu791, Gln794, Asn808, and Glu811 each coordinate Ca(2+). The chain crosses the membrane as a helical span at residues 807 to 827 (NNALEWVIYTTSIIFVLPLFL). Residues 828 to 832 (NIPAY) are Extracellular-facing. A helical membrane pass occupies residues 833–853 (MQWQCGAIAIFFYWMNFLLYL). Residues 854-876 (QRFENCGIFIVMLEVIFKTLLRS) are Cytoplasmic-facing. Residue Cys859 is modified to Cysteine sulfenic acid (-SOH); transient; in hyperoxia. Residues 877–897 (TGVFIFLLLAFGLSFYVLLNF) form a helical membrane-spanning segment. Residues 898–904 (QDAFSTP) are Extracellular-facing. The segment at residues 905–925 (LLSLIQTFSMMLGDINYRDAF) is an intramembrane region (pore-forming). Residues 926-937 (LEPLFRNELAYP) lie on the Extracellular side of the membrane. The chain crosses the membrane as a helical span at residues 938 to 959 (VLTFGQLIAFTMFVPIVLMNLL). The Cytoplasmic segment spans residues 960–1125 (IGLAVGDIAE…THCSISHPDF (166 aa)). Residues 1044–1073 (MEILKQKYRLKDLTSLLEKQHELIKLIIQK) adopt a coiled-coil conformation. 1048–1054 (KQKYRLK) provides a ligand contact to a 1,2-diacyl-sn-glycero-3-phospho-(1D-myo-inositol).

It belongs to the transient receptor (TC 1.A.4) family. As to quaternary structure, homotetramer. Interacts with TMEM100. Interacts with EGLN1. Interacts with the scorpion wasabi receptor toxin at the same site that electrophiles but in a non-covalent manner. In terms of processing, TRPA1 activation by electrophiles occurs though covalent modification of specific cysteine residues in the N-terminal cytoplasmic domain. Hydroxylation is required for TRPA1 activity inhibition in normoxia. In hypoxia, the decrease in oxygen concentration diminishes the activity of the hydroxylase EGLN1, thus relieving TRPA1 from inhibition and ultimately leading to channel activation. Post-translationally, oxidation of Cys-634 and Cys-859 in hyperoxia may override the hydroxylase EGLN1-mediated inhibition, causing TRPA1 activation. As to expression, expressed in inner ear (at protein level). Specifically expressed in a subset of nociceptive neurons. Expressed in the same neurons that TRPV1. In contrast, it is not expressed in neurons expressing TRPM8. Expressed in the superior cervical ganglion of vagus nerve. Expressed in the inferior ganglion (nodose ganglion) of vagus nerve. Expressed in dorsal root ganglia neurons.

It localises to the cell membrane. The enzyme catalyses Ca(2+)(in) = Ca(2+)(out). It carries out the reaction Mg(2+)(in) = Mg(2+)(out). The catalysed reaction is Na(+)(in) = Na(+)(out). It catalyses the reaction K(+)(in) = K(+)(out). The enzyme catalyses Zn(2+)(in) = Zn(2+)(out). Its activity is regulated as follows. Electrophilic ligands activate the channel by covalent modification of intracellular cysteines. Cys-622 plays a key role in covalent binding of electrophiles. Extracellular Ca(2+) both potentiates and inactivates TRPA1; a rapid potentiation follows by slow desensitization. Activated by increase in intracellular Ca(2+) concentration. Inhibited by the potent blocker of TRPV channels ruthenium red, A-967079. Activated by icilin, sulfhydryl reactive agent MTSEA, N-methyl maleimide (NMM), and PF-4840154. Also activated by hyperoxia. Activated by intracellular Zn(2+). TRPA1 activation may critically depend on the presence of small intracellular compounds such as polyphosphates. In terms of biological role, ligand-activated Ca(2+)-permeable, nonselective cation channel. Involved in pain detection and possibly also in cold perception, oxygen concentration perception, cough, itch, and inner ear function. Has a relatively high Ca(2+) selectivity, with a preference for divalent over monovalent cations (Ca(2+) &gt; Ba(2+) &gt; Mg(2+) &gt; NH4(+) &gt; Li(+) &gt; K(+)), the influx of cation into the cytoplasm, leads to membrane depolarization. Has a central role in the pain response to endogenous inflammatory mediators, such as bradykinin and to a diverse array of irritants. Activated by a large variety of structurally unrelated electrophilic and non-electrophilic chemical compounds, such as allylthiocyanate (AITC) from mustard oil or wasabi, cinnamaldehyde, diallyl disulfide (DADS) from garlic, and acrolein, an environmental irritant. Electrophilic ligands activate TRPA1 by interacting with critical N-terminal Cys residues in a covalent manner. Non-electrophile agonists bind at distinct sites in the transmembrane domain to promote channel activation. Also acts as an ionotropic cannabinoid receptor by being activated by delta(9)-tetrahydrocannabinol (THC), the psychoactive component of marijuana. May be a component for the mechanosensitive transduction channel of hair cells in inner ear, thereby participating in the perception of sounds. The chain is Transient receptor potential cation channel subfamily A member 1 from Mus musculus (Mouse).